A 235-amino-acid chain; its full sequence is tRNA pseudouridine synthase B (235 aa).

D45 (nucleophile) is an active-site residue.

It belongs to the pseudouridine synthase TruB family. Type 1 subfamily.

It catalyses the reaction uridine(55) in tRNA = pseudouridine(55) in tRNA. In terms of biological role, responsible for synthesis of pseudouridine from uracil-55 in the psi GC loop of transfer RNAs. This is tRNA pseudouridine synthase B from Chlamydia pneumoniae (Chlamydophila pneumoniae).